The sequence spans 228 residues: Aspartate racemase (228 aa).

47–49 (DRT) contributes to the substrate binding site. The Proton donor/acceptor role is filled by Cys82. Substrate-binding positions include 83–85 (NTA) and Lys164. Cys194 (proton donor/acceptor) is an active-site residue.

Belongs to the aspartate/glutamate racemases family. As to quaternary structure, homodimer. The existence of the interchain disulfide bond seen in the crystal structures is uncertain, but disulfide bonds have been reported for cytoplasmic proteins from thermophiles.

It catalyses the reaction L-aspartate = D-aspartate. Weakly inhibited by citrate, but not by asparagine. The chain is Aspartate racemase from Pyrococcus horikoshii (strain ATCC 700860 / DSM 12428 / JCM 9974 / NBRC 100139 / OT-3).